The chain runs to 339 residues: DNA-directed RNA polymerase subunit alpha (339 aa).

The tract at residues 1–235 (MVIQKNWQEL…DQLQVFVNFE (235 aa)) is alpha N-terminal domain (alpha-NTD). The interval 251–339 (FNPALLKKVD…DLAKRFEEHY (89 aa)) is alpha C-terminal domain (alpha-CTD).

The protein belongs to the RNA polymerase alpha chain family. In terms of assembly, homodimer. The RNAP catalytic core consists of 2 alpha, 1 beta, 1 beta' and 1 omega subunit. When a sigma factor is associated with the core the holoenzyme is formed, which can initiate transcription.

It carries out the reaction RNA(n) + a ribonucleoside 5'-triphosphate = RNA(n+1) + diphosphate. Its function is as follows. DNA-dependent RNA polymerase catalyzes the transcription of DNA into RNA using the four ribonucleoside triphosphates as substrates. This is DNA-directed RNA polymerase subunit alpha from Methylorubrum populi (strain ATCC BAA-705 / NCIMB 13946 / BJ001) (Methylobacterium populi).